Here is a 440-residue protein sequence, read N- to C-terminus: tRNA modification GTPase MnmE (440 aa).

Residues R23, E80, and K120 each contribute to the (6S)-5-formyl-5,6,7,8-tetrahydrofolate site. One can recognise a TrmE-type G domain in the interval 217-366 (GLKIVIAGEP…LLAMLQAHLP (150 aa)). N227 lines the K(+) pocket. GTP is bound by residues 227 to 232 (NAGKSS), 246 to 252 (TEIAGTT), and 271 to 274 (DTAG). Residue S231 coordinates Mg(2+). 3 residues coordinate K(+): T246, I248, and T251. T252 provides a ligand contact to Mg(2+). K440 provides a ligand contact to (6S)-5-formyl-5,6,7,8-tetrahydrofolate.

This sequence belongs to the TRAFAC class TrmE-Era-EngA-EngB-Septin-like GTPase superfamily. TrmE GTPase family. Homodimer. Heterotetramer of two MnmE and two MnmG subunits. It depends on K(+) as a cofactor.

The protein localises to the cytoplasm. Its function is as follows. Exhibits a very high intrinsic GTPase hydrolysis rate. Involved in the addition of a carboxymethylaminomethyl (cmnm) group at the wobble position (U34) of certain tRNAs, forming tRNA-cmnm(5)s(2)U34. The protein is tRNA modification GTPase MnmE of Sinorhizobium medicae (strain WSM419) (Ensifer medicae).